A 263-amino-acid polypeptide reads, in one-letter code: Proteasome subunit alpha type-1 (263 aa).

Position 1 is an N-acetylmethionine (methionine 1). Residue serine 110 is modified to Phosphoserine; alternate. O-linked (GlcNAc) serine; alternate glycosylation is present at serine 110. Lysine 115 is covalently cross-linked (Glycyl lysine isopeptide (Lys-Gly) (interchain with G-Cter in ubiquitin)). Serine 177 is subject to Phosphoserine. A Glycyl lysine isopeptide (Lys-Gly) (interchain with G-Cter in ubiquitin) cross-link involves residue lysine 208. A disordered region spans residues 232–263 (FLEGLEERPQRKAQPAQPADEPAEKADEPMEH). The span at 253 to 263 (PAEKADEPMEH) shows a compositional bias: basic and acidic residues.

It belongs to the peptidase T1A family. The 26S proteasome consists of a 20S proteasome core and two 19S regulatory subunits. The 20S proteasome core is a barrel-shaped complex made of 28 subunits that are arranged in four stacked rings. The two outer rings are each formed by seven alpha subunits, and the two inner rings are formed by seven beta subunits. The proteolytic activity is exerted by three beta-subunits PSMB5, PSMB6 and PSMB7. Interacts with NOTCH3. Interacts with ZFAND1.

It localises to the cytoplasm. Its subcellular location is the nucleus. Its function is as follows. Component of the 20S core proteasome complex involved in the proteolytic degradation of most intracellular proteins. This complex plays numerous essential roles within the cell by associating with different regulatory particles. Associated with two 19S regulatory particles, forms the 26S proteasome and thus participates in the ATP-dependent degradation of ubiquitinated proteins. The 26S proteasome plays a key role in the maintenance of protein homeostasis by removing misfolded or damaged proteins that could impair cellular functions, and by removing proteins whose functions are no longer required. Associated with the PA200 or PA28, the 20S proteasome mediates ubiquitin-independent protein degradation. This type of proteolysis is required in several pathways including spermatogenesis (20S-PA200 complex) or generation of a subset of MHC class I-presented antigenic peptides (20S-PA28 complex). This Macaca fascicularis (Crab-eating macaque) protein is Proteasome subunit alpha type-1 (PSMA1).